The sequence spans 316 residues: Pantothenate kinase (316 aa).

An ATP-binding site is contributed by glycine 95–serine 102.

This sequence belongs to the prokaryotic pantothenate kinase family.

It is found in the cytoplasm. The enzyme catalyses (R)-pantothenate + ATP = (R)-4'-phosphopantothenate + ADP + H(+). Its pathway is cofactor biosynthesis; coenzyme A biosynthesis; CoA from (R)-pantothenate: step 1/5. This chain is Pantothenate kinase, found in Shewanella sediminis (strain HAW-EB3).